The chain runs to 429 residues: Citrate synthase, plasmid (429 aa).

Catalysis depends on residues H306 and D364.

This sequence belongs to the citrate synthase family.

It catalyses the reaction oxaloacetate + acetyl-CoA + H2O = citrate + CoA + H(+). It functions in the pathway carbohydrate metabolism; tricarboxylic acid cycle; isocitrate from oxaloacetate: step 1/2. The exact function of the plasmid-encoded citrate synthase is not clear, it could help nodulation by allowing the bacteria to use citrate as a chelator of iron and calcium. This is Citrate synthase, plasmid (pcsA) from Rhizobium tropici.